Here is a 108-residue protein sequence, read N- to C-terminus: MIKAKILKIYLREGDKFEGELMYKHIMKILKREGISGATVYKGICGYGVRGVAEFDIFRLSVNLPVIIECVDIEENINRVLPKLYEVIKNNGLIIITDCHVYKGETYE.

The protein belongs to the UPF0166 family.

The polypeptide is UPF0166 protein MJ1524 (Methanocaldococcus jannaschii (strain ATCC 43067 / DSM 2661 / JAL-1 / JCM 10045 / NBRC 100440) (Methanococcus jannaschii)).